A 470-amino-acid polypeptide reads, in one-letter code: Aminodeoxychorismate synthase component 1 (470 aa).

It belongs to the anthranilate synthase component I family. As to quaternary structure, monomer. Heterodimer consisting of two non-identical subunits: a glutamine amidotransferase subunit (PabA) and a aminodeoxychorismate synthase subunit (PabB). Mg(2+) is required as a cofactor.

It catalyses the reaction chorismate + L-glutamine = 4-amino-4-deoxychorismate + L-glutamate. It functions in the pathway cofactor biosynthesis; tetrahydrofolate biosynthesis; 4-aminobenzoate from chorismate: step 1/2. In terms of biological role, part of a heterodimeric complex that catalyzes the two-step biosynthesis of 4-amino-4-deoxychorismate (ADC), a precursor of p-aminobenzoate (PABA) and tetrahydrofolate. In the first step, a glutamine amidotransferase (PabA) generates ammonia as a substrate that, along with chorismate, is used in the second step, catalyzed by aminodeoxychorismate synthase (PabB) to produce ADC. This is Aminodeoxychorismate synthase component 1 (pabB) from Bacillus subtilis (strain 168).